Here is a 291-residue protein sequence, read N- to C-terminus: tRNA U34 carboxymethyltransferase (291 aa).

Carboxy-S-adenosyl-L-methionine is bound by residues Lys-61, Trp-75, Lys-80, Gly-100, 122-124 (DPS), 149-150 (VE), Tyr-169, and Arg-284.

The protein belongs to the class I-like SAM-binding methyltransferase superfamily. CmoB family. As to quaternary structure, homotetramer.

The catalysed reaction is carboxy-S-adenosyl-L-methionine + 5-hydroxyuridine(34) in tRNA = 5-carboxymethoxyuridine(34) in tRNA + S-adenosyl-L-homocysteine + H(+). In terms of biological role, catalyzes carboxymethyl transfer from carboxy-S-adenosyl-L-methionine (Cx-SAM) to 5-hydroxyuridine (ho5U) to form 5-carboxymethoxyuridine (cmo5U) at position 34 in tRNAs. This Campylobacter jejuni subsp. jejuni serotype O:2 (strain ATCC 700819 / NCTC 11168) protein is tRNA U34 carboxymethyltransferase.